We begin with the raw amino-acid sequence, 239 residues long: MATPHINAEMGDFADVVLMPGDPLRAKYIAETFLEDAREVNNVRGMLGFTGTYKGRKISVMGHGMGIPSCSIYTKELITDFGVKKIIRVGSCGAVLPHVKLRDVVIGMGACTDSKVNRIRFKDHDFAAIADFDMVRNAVDAAKALGVDARVGNLFSADLFYSPDGEMFDVMEKYGILGVEMEAAGIYGVAAEFGAKALTICTVSDHIRTHEQTTAAERQTTFNDMIKIALESVLLGDKE.

His5 serves as a coordination point for a purine D-ribonucleoside. The phosphate site is built by Gly21 and Arg25. Lys27 bears the N6-acetyllysine mark. Residues Arg44 and 88 to 91 (RVGS) each bind phosphate. A purine D-ribonucleoside is bound by residues 180 to 182 (EME) and 204 to 205 (SD). Asp205 serves as the catalytic Proton donor.

It belongs to the PNP/UDP phosphorylase family. As to quaternary structure, homohexamer; trimer of homodimers.

The enzyme catalyses a purine D-ribonucleoside + phosphate = a purine nucleobase + alpha-D-ribose 1-phosphate. It carries out the reaction a purine 2'-deoxy-D-ribonucleoside + phosphate = a purine nucleobase + 2-deoxy-alpha-D-ribose 1-phosphate. Functionally, catalyzes the reversible phosphorolytic breakdown of the N-glycosidic bond in the beta-(deoxy)ribonucleoside molecules, with the formation of the corresponding free purine bases and pentose-1-phosphate. This chain is Purine nucleoside phosphorylase DeoD-type, found in Escherichia coli O81 (strain ED1a).